The chain runs to 304 residues: Non-specific ribonucleoside hydrolase RihC (304 aa).

His233 is a catalytic residue.

Belongs to the IUNH family. RihC subfamily.

Hydrolyzes both purine and pyrimidine ribonucleosides with a broad-substrate specificity. This chain is Non-specific ribonucleoside hydrolase RihC, found in Klebsiella pneumoniae subsp. pneumoniae (strain ATCC 700721 / MGH 78578).